A 585-amino-acid polypeptide reads, in one-letter code: 1-deoxy-D-xylulose-5-phosphate synthase (585 aa).

Thiamine diphosphate-binding positions include His-80 and 121-123 (GHS). Asp-152 is a Mg(2+) binding site. Thiamine diphosphate contacts are provided by residues 153-154 (GS), Asn-181, Tyr-259, and Glu-334. Residue Asn-181 participates in Mg(2+) binding.

It belongs to the transketolase family. DXPS subfamily. In terms of assembly, homodimer. The cofactor is Mg(2+). It depends on thiamine diphosphate as a cofactor.

It catalyses the reaction D-glyceraldehyde 3-phosphate + pyruvate + H(+) = 1-deoxy-D-xylulose 5-phosphate + CO2. It participates in metabolic intermediate biosynthesis; 1-deoxy-D-xylulose 5-phosphate biosynthesis; 1-deoxy-D-xylulose 5-phosphate from D-glyceraldehyde 3-phosphate and pyruvate: step 1/1. Its function is as follows. Catalyzes the acyloin condensation reaction between C atoms 2 and 3 of pyruvate and glyceraldehyde 3-phosphate to yield 1-deoxy-D-xylulose-5-phosphate (DXP). The sequence is that of 1-deoxy-D-xylulose-5-phosphate synthase from Buchnera aphidicola subsp. Schizaphis graminum (strain Sg).